We begin with the raw amino-acid sequence, 241 residues long: Phycocyanobilin:ferredoxin oxidoreductase (241 aa).

It belongs to the HY2 family.

The catalysed reaction is (2R,3Z)-phycocyanobilin + 4 oxidized [2Fe-2S]-[ferredoxin] = biliverdin IXalpha + 4 reduced [2Fe-2S]-[ferredoxin] + 4 H(+). Functionally, catalyzes the four-electron reduction of biliverdin IX-alpha (2-electron reduction at both the A and D rings); the reaction proceeds via an isolatable 2-electron intermediate, 181,182-dihydrobiliverdin. This is Phycocyanobilin:ferredoxin oxidoreductase from Prochlorococcus marinus (strain MIT 9215).